The primary structure comprises 702 residues: Elongation factor G 1 (702 aa).

The 283-residue stretch at 8-290 folds into the tr-type G domain; sequence ERYRNIGISA…AVIDFLPSPV (283 aa). GTP-binding positions include 17-24, 88-92, and 142-145; these read AHIDAGKT, DTPGH, and NKMD.

Belongs to the TRAFAC class translation factor GTPase superfamily. Classic translation factor GTPase family. EF-G/EF-2 subfamily.

Its subcellular location is the cytoplasm. Its function is as follows. Catalyzes the GTP-dependent ribosomal translocation step during translation elongation. During this step, the ribosome changes from the pre-translocational (PRE) to the post-translocational (POST) state as the newly formed A-site-bound peptidyl-tRNA and P-site-bound deacylated tRNA move to the P and E sites, respectively. Catalyzes the coordinated movement of the two tRNA molecules, the mRNA and conformational changes in the ribosome. This chain is Elongation factor G 1, found in Cupriavidus pinatubonensis (strain JMP 134 / LMG 1197) (Cupriavidus necator (strain JMP 134)).